The sequence spans 229 residues: MLKYLNQSEAINVDLELFNEYKFSVDQLMELAGLSCAHAIAKCFPADRFGRVLVCCGPGNNGGDGLVCARHLALMGYLPVLYYPKPTPKPLYENLAHQCKRMEIESISECPSVALAAECYDLIVDALFGFSFKPPVRADFVPVVELLQQTKLPIASVDIPSGWDVEAGKLNECDMEPTLLISLTAPKLCAKHFKGKHHFLGGRFVPPALQRKYELNLPTYPGNEMCLEL.

Residues 10 to 217 (AINVDLELFN…ALQRKYELNL (208 aa)) enclose the YjeF N-terminal domain. 60–64 (NNGGD) contributes to the (6S)-NADPHX binding site. Residues Asn61 and Asp125 each coordinate K(+). (6S)-NADPHX-binding positions include 129–135 (GFSFKPP) and Asp158. Ser161 contributes to the K(+) binding site.

Belongs to the NnrE/AIBP family. It depends on K(+) as a cofactor.

The enzyme catalyses (6R)-NADHX = (6S)-NADHX. It carries out the reaction (6R)-NADPHX = (6S)-NADPHX. Functionally, catalyzes the epimerization of the S- and R-forms of NAD(P)HX, a damaged form of NAD(P)H that is a result of enzymatic or heat-dependent hydration. This is a prerequisite for the S-specific NAD(P)H-hydrate dehydratase to allow the repair of both epimers of NAD(P)HX. The protein is NAD(P)H-hydrate epimerase of Drosophila mojavensis (Fruit fly).